Consider the following 134-residue polypeptide: MAGQSDKDVKYYTLEEIQKHKDSKSTWVILHHKVYDLTKFLEEHPGGEEVLREQAGGDATENFEDVGHSTDARELSKTYIIGELHPDDRSKIAKPSDTLITTVESNSSWWTNWVIPAISALAVALMYRLYMAED.

Ala2 bears the N-acetylalanine mark. N6-acetyllysine occurs at positions 7, 10, and 19. Positions 9-85 constitute a Cytochrome b5 heme-binding domain; sequence VKYYTLEEIQ…SKTYIIGELH (77 aa). Heme-binding residues include His44 and His68. The helical transmembrane segment at 109-131 threads the bilayer; it reads WWTNWVIPAISALAVALMYRLYM.

It belongs to the cytochrome b5 family.

The protein resides in the endoplasmic reticulum membrane. It is found in the microsome membrane. Its function is as follows. Cytochrome b5 is a membrane-bound hemoprotein functioning as an electron carrier for several membrane-bound oxygenases. It is also involved in several steps of the sterol biosynthesis pathway, particularly in the C-5 double bond introduction during the C-5 desaturation. The sequence is that of Cytochrome b5 (Cyb5a) from Mus musculus (Mouse).